Reading from the N-terminus, the 1775-residue chain is ATP-dependent RNA helicase DEAH12, chloroplastic (1775 aa).

The transit peptide at 1 to 33 (MRNSFPPSDGGRSATDRRQQSSHSSSTNRYNSR) directs the protein to the chloroplast. The disordered stretch occupies residues 1–77 (MRNSFPPSDG…NPSSGYSPPV (77 aa)). A compositionally biased stretch (low complexity) spans 21 to 34 (SSHSSSTNRYNSRS). The segment covering 35–60 (AQSSPPLNHRPTWNQQHSQYPNSNFP) has biased composition (polar residues). One can recognise a Helicase ATP-binding domain in the interval 316-480 (LKKIHREQIM…FFSCGILLVN (165 aa)). 329-336 (GETGSGKS) contributes to the ATP binding site. A DEAH box motif is present at residues 427-430 (DEAH). One can recognise a Helicase C-terminal domain in the interval 510-676 (DVVKMAVEIH…VALLRMLALG (167 aa)). The segment at 1560 to 1767 (IEVECPICLS…EPCYAHLRTI (208 aa)) is TRIAD supradomain. Zn(2+)-binding residues include cysteine 1564, cysteine 1567, cysteine 1580, histidine 1582, cysteine 1585, cysteine 1588, cysteine 1607, cysteine 1612, cysteine 1652, cysteine 1657, cysteine 1675, cysteine 1678, cysteine 1683, cysteine 1686, histidine 1691, cysteine 1696, cysteine 1722, and cysteine 1725. An RING-type 1 zinc finger spans residues 1564–1612 (CPICLSEVDDGYSLEGCSHLFCKACLLEQFEASMRNFDAFPILCSHIDC). An IBR-type zinc finger spans residues 1631-1696 (DELFSASLSS…HLEYHPLITC (66 aa)). The segment at 1722–1750 (CPICKSTIEKTDGCNHMKCRCGKHICWTC) adopts an RING-type 2; atypical zinc-finger fold. Cysteine 1735 is an active-site residue. Residues cysteine 1740 and cysteine 1742 each contribute to the Zn(2+) site.

It belongs to the DEAD box helicase family. DEAH subfamily.

It localises to the plastid. The protein localises to the chloroplast. The enzyme catalyses ATP + H2O = ADP + phosphate + H(+). The protein is ATP-dependent RNA helicase DEAH12, chloroplastic of Arabidopsis thaliana (Mouse-ear cress).